Consider the following 580-residue polypeptide: PTS system fructose-specific EIIB'BC component (580 aa).

2 PTS EIIB type-2 domains span residues 1 to 99 (MSSS…QLAA) and 120 to 215 (IVAI…KALA). The Phosphocysteine intermediate; for EIIB activity role is filled by Cys126. Position 126 is a phosphocysteine; by EIIA (Cys126). A PTS EIIC type-2 domain is found at 243-580 (AYKHLMTGVS…LKKPVADVIA (338 aa)). 9 helical membrane-spanning segments follow: residues 254–274 (MLPFVTAGGLLIALAFALGGI), 289–309 (LFQIGAKAGFTLMVPALAGYI), 332–352 (LNAGFLGGIIAGFIAGYGVAA), 369–389 (VLILPVLGTLLVGLAMMYVFG), 410–430 (SALLLGLLLGGMMAFDMGGPV), 451–471 (AAAMVAGMTPPLGIALATWVF), 483–503 (ATAAGVLGLAFVTEGAIPYAA), 509–529 (TIPALVIGSAVAGAISMTAGA), and 549–571 (HLLNYVLALVVGVVVTAVALRLL).

It is found in the cell inner membrane. The catalysed reaction is D-fructose(out) + N(pros)-phospho-L-histidyl-[protein] = D-fructose 1-phosphate(in) + L-histidyl-[protein]. In terms of biological role, the phosphoenolpyruvate-dependent sugar phosphotransferase system (sugar PTS), a major carbohydrate active transport system, catalyzes the phosphorylation of incoming sugar substrates concomitantly with their translocation across the cell membrane. The enzyme II FruAB PTS system is involved in fructose transport. The polypeptide is PTS system fructose-specific EIIB'BC component (Xanthomonas campestris pv. campestris (strain ATCC 33913 / DSM 3586 / NCPPB 528 / LMG 568 / P 25)).